The sequence spans 163 residues: Endoribonuclease YbeY (163 aa).

Positions 119, 123, and 129 each coordinate Zn(2+).

This sequence belongs to the endoribonuclease YbeY family. Requires Zn(2+) as cofactor.

It is found in the cytoplasm. Its function is as follows. Single strand-specific metallo-endoribonuclease involved in late-stage 70S ribosome quality control and in maturation of the 3' terminus of the 16S rRNA. This chain is Endoribonuclease YbeY, found in Actinobacillus pleuropneumoniae serotype 5b (strain L20).